A 352-amino-acid chain; its full sequence is Holliday junction branch migration complex subunit RuvB (352 aa).

Residues 1–42 are disordered; sequence MAIVSSSAGRADSQPPAAKSRVVDASPLPEEASPAREDGLRP. The large ATPase domain (RuvB-L) stretch occupies residues 13-201; it reads SQPPAAKSRV…FGLIQRLEFY (189 aa). Positions 33 to 42 are enriched in basic and acidic residues; the sequence is SPAREDGLRP. 9 residues coordinate ATP: Leu40, Arg41, Gly82, Lys85, Thr86, Thr87, Arg191, Tyr201, and Arg238. A Mg(2+)-binding site is contributed by Thr86. The interval 202 to 273 is small ATPAse domain (RuvB-S); it reads GLEDLQAIVE…LVDEALTLHR (72 aa). The segment at 276–352 is head domain (RuvB-H); the sequence is ARGLDASDRR…RRHLGWPELP (77 aa). DNA contacts are provided by Arg331 and Arg336.

This sequence belongs to the RuvB family. As to quaternary structure, homohexamer. Forms an RuvA(8)-RuvB(12)-Holliday junction (HJ) complex. HJ DNA is sandwiched between 2 RuvA tetramers; dsDNA enters through RuvA and exits via RuvB. An RuvB hexamer assembles on each DNA strand where it exits the tetramer. Each RuvB hexamer is contacted by two RuvA subunits (via domain III) on 2 adjacent RuvB subunits; this complex drives branch migration. In the full resolvosome a probable DNA-RuvA(4)-RuvB(12)-RuvC(2) complex forms which resolves the HJ.

The protein localises to the cytoplasm. The catalysed reaction is ATP + H2O = ADP + phosphate + H(+). In terms of biological role, the RuvA-RuvB-RuvC complex processes Holliday junction (HJ) DNA during genetic recombination and DNA repair, while the RuvA-RuvB complex plays an important role in the rescue of blocked DNA replication forks via replication fork reversal (RFR). RuvA specifically binds to HJ cruciform DNA, conferring on it an open structure. The RuvB hexamer acts as an ATP-dependent pump, pulling dsDNA into and through the RuvAB complex. RuvB forms 2 homohexamers on either side of HJ DNA bound by 1 or 2 RuvA tetramers; 4 subunits per hexamer contact DNA at a time. Coordinated motions by a converter formed by DNA-disengaged RuvB subunits stimulates ATP hydrolysis and nucleotide exchange. Immobilization of the converter enables RuvB to convert the ATP-contained energy into a lever motion, pulling 2 nucleotides of DNA out of the RuvA tetramer per ATP hydrolyzed, thus driving DNA branch migration. The RuvB motors rotate together with the DNA substrate, which together with the progressing nucleotide cycle form the mechanistic basis for DNA recombination by continuous HJ branch migration. Branch migration allows RuvC to scan DNA until it finds its consensus sequence, where it cleaves and resolves cruciform DNA. In Prochlorococcus marinus (strain MIT 9313), this protein is Holliday junction branch migration complex subunit RuvB.